The following is an 804-amino-acid chain: Serine/threonine-protein kinase ATG1 (804 aa).

The region spanning 12 to 308 (FTIGPEIGRG…FQEFFNDPLI (297 aa)) is the Protein kinase domain. Residues 18 to 26 (IGRGSFANV) and lysine 41 each bind ATP. The active-site Proton acceptor is aspartate 158. Disordered stretches follow at residues 339 to 364 (TSPP…ERAP), 395 to 415 (INKS…KGAR), and 455 to 506 (PSPH…MPIS). Residues 404–415 (TVKDGQIKKGAR) show a composition bias toward basic and acidic residues. The span at 462 to 495 (NEHSAANPSGPTETQTQRRFSPSSRTSSIGSNRR) shows a compositional bias: polar residues.

This sequence belongs to the protein kinase superfamily. Ser/Thr protein kinase family. APG1/unc-51/ULK1 subfamily. Homodimer. Forms a ternary complex with ATG13 and ATG17.

Its subcellular location is the cytoplasm. The protein resides in the preautophagosomal structure membrane. It catalyses the reaction L-seryl-[protein] + ATP = O-phospho-L-seryl-[protein] + ADP + H(+). The catalysed reaction is L-threonyl-[protein] + ATP = O-phospho-L-threonyl-[protein] + ADP + H(+). Functionally, serine/threonine protein kinase involved in the cytoplasm to vacuole transport (Cvt) and found to be essential in autophagy, where it is required for the formation of autophagosomes. Involved in the clearance of protein aggregates which cannot be efficiently cleared by the proteasome. Required for selective autophagic degradation of the nucleus (nucleophagy) as well as for mitophagy which contributes to regulate mitochondrial quantity and quality by eliminating the mitochondria to a basal level to fulfill cellular energy requirements and preventing excess ROS production. Also involved in endoplasmic reticulum-specific autophagic process, in selective removal of ER-associated degradation (ERAD) substrates. Plays a key role in ATG9 and ATG23 cycling through the pre-autophagosomal structure and is necessary to promote ATG18 binding to ATG9 through phosphorylation of ATG9. Catalyzes phosphorylation of ATG4, decreasing the interaction between ATG4 and ATG8 and impairing deconjugation of PE-conjugated forms of ATG8. In Pichia angusta (Yeast), this protein is Serine/threonine-protein kinase ATG1.